The primary structure comprises 170 residues: NADH-quinone oxidoreductase subunit B (170 aa).

Residues Cys-37, Cys-38, Cys-102, and Cys-131 each coordinate [4Fe-4S] cluster.

This sequence belongs to the complex I 20 kDa subunit family. NDH-1 is composed of 14 different subunits. Subunits NuoB, C, D, E, F, and G constitute the peripheral sector of the complex. [4Fe-4S] cluster is required as a cofactor.

Its subcellular location is the cell inner membrane. It carries out the reaction a quinone + NADH + 5 H(+)(in) = a quinol + NAD(+) + 4 H(+)(out). Functionally, NDH-1 shuttles electrons from NADH, via FMN and iron-sulfur (Fe-S) centers, to quinones in the respiratory chain. The immediate electron acceptor for the enzyme in this species is believed to be ubiquinone. Couples the redox reaction to proton translocation (for every two electrons transferred, four hydrogen ions are translocated across the cytoplasmic membrane), and thus conserves the redox energy in a proton gradient. This is NADH-quinone oxidoreductase subunit B from Geobacter metallireducens (strain ATCC 53774 / DSM 7210 / GS-15).